A 339-amino-acid chain; its full sequence is NADPH dehydrogenase (339 aa).

Residue proline 21–cysteine 24 participates in FMN binding. Position 26 (tyrosine 26) interacts with substrate. Residues alanine 57 and glutamine 99 each coordinate FMN. Histidine 162–histidine 165 serves as a coordination point for substrate. Residues arginine 215 and glycine 307–arginine 308 each bind FMN.

It belongs to the NADH:flavin oxidoreductase/NADH oxidase family. NamA subfamily. Homotetramer. It depends on FMN as a cofactor.

The catalysed reaction is A + NADPH + H(+) = AH2 + NADP(+). Functionally, catalyzes the reduction of the double bond of an array of alpha,beta-unsaturated aldehydes and ketones. It also reduces the nitro group of nitroester and nitroaromatic compounds. It could have a role in detoxification processes. This is NADPH dehydrogenase from Clostridium acetobutylicum (strain ATCC 824 / DSM 792 / JCM 1419 / IAM 19013 / LMG 5710 / NBRC 13948 / NRRL B-527 / VKM B-1787 / 2291 / W).